Reading from the N-terminus, the 179-residue chain is Bifunctional protein PyrR (179 aa).

The short motif at 99–111 (VILVDDVLYTGRT) is the PRPP-binding element.

It belongs to the purine/pyrimidine phosphoribosyltransferase family. PyrR subfamily. Homodimer and homohexamer; in equilibrium.

It catalyses the reaction UMP + diphosphate = 5-phospho-alpha-D-ribose 1-diphosphate + uracil. In terms of biological role, regulates transcriptional attenuation of the pyrimidine nucleotide (pyr) operon by binding in a uridine-dependent manner to specific sites on pyr mRNA. This disrupts an antiterminator hairpin in the RNA and favors formation of a downstream transcription terminator, leading to a reduced expression of downstream genes. Functionally, also displays a weak uracil phosphoribosyltransferase activity which is not physiologically significant. In Limosilactobacillus fermentum (strain NBRC 3956 / LMG 18251) (Lactobacillus fermentum), this protein is Bifunctional protein PyrR.